We begin with the raw amino-acid sequence, 233 residues long: Gamma-glutamyl-hercynylcysteine sulfoxide hydrolase (233 aa).

Cys2 (nucleophile) is an active-site residue. A Glutamine amidotransferase type-2 domain is found at 2 to 233 (CRHLGWLGAQ…TALDRAKGPR (232 aa)).

The catalysed reaction is gamma-L-glutamyl-hercynylcysteine S-oxide + H2O = S-(hercyn-2-yl)-L-cysteine S-oxide + L-glutamate. It participates in amino-acid biosynthesis; ergothioneine biosynthesis. Its function is as follows. Catalyzes the hydrolysis of the gamma-glutamyl amide bond of hercynyl-gamma-L-glutamyl-L-cysteine sulfoxide to produce hercynylcysteine sulfoxide, a step in the biosynthesis pathway of ergothioneine. Ergothioneine is an antioxidant that protects mycobacteria from oxidative stress. The polypeptide is Gamma-glutamyl-hercynylcysteine sulfoxide hydrolase (egtC) (Mycobacterium tuberculosis (strain ATCC 25618 / H37Rv)).